A 513-amino-acid polypeptide reads, in one-letter code: ATP synthase subunit alpha (513 aa).

Position 169 to 176 (169 to 176 (GDRQTGKT)) interacts with ATP.

This sequence belongs to the ATPase alpha/beta chains family. F-type ATPases have 2 components, CF(1) - the catalytic core - and CF(0) - the membrane proton channel. CF(1) has five subunits: alpha(3), beta(3), gamma(1), delta(1), epsilon(1). CF(0) has three main subunits: a(1), b(2) and c(9-12). The alpha and beta chains form an alternating ring which encloses part of the gamma chain. CF(1) is attached to CF(0) by a central stalk formed by the gamma and epsilon chains, while a peripheral stalk is formed by the delta and b chains.

It is found in the cell inner membrane. The enzyme catalyses ATP + H2O + 4 H(+)(in) = ADP + phosphate + 5 H(+)(out). Its function is as follows. Produces ATP from ADP in the presence of a proton gradient across the membrane. The alpha chain is a regulatory subunit. In Ruegeria sp. (strain TM1040) (Silicibacter sp.), this protein is ATP synthase subunit alpha.